Consider the following 476-residue polypeptide: UDP-N-acetylmuramate--L-alanine ligase (476 aa).

112-118 serves as a coordination point for ATP; that stretch reads GTHGKTT.

Belongs to the MurCDEF family.

Its subcellular location is the cytoplasm. The enzyme catalyses UDP-N-acetyl-alpha-D-muramate + L-alanine + ATP = UDP-N-acetyl-alpha-D-muramoyl-L-alanine + ADP + phosphate + H(+). The protein operates within cell wall biogenesis; peptidoglycan biosynthesis. In terms of biological role, cell wall formation. This chain is UDP-N-acetylmuramate--L-alanine ligase, found in Magnetococcus marinus (strain ATCC BAA-1437 / JCM 17883 / MC-1).